The following is a 247-amino-acid chain: Fibroblast growth factor 14 (247 aa).

Disordered stretches follow at residues 1–38 (MAAA…KNRG) and 216–247 (ETVP…CKTT). Basic and acidic residues predominate over residues 15-25 (QAREQHWDRPS).

The protein belongs to the heparin-binding growth factors family. In terms of assembly, interacts with SCN8A.

It is found in the nucleus. In terms of biological role, probably involved in nervous system development and function. This is Fibroblast growth factor 14 (Fgf14) from Rattus norvegicus (Rat).